The chain runs to 442 residues: tRNA-2-methylthio-N(6)-dimethylallyladenosine synthase (442 aa).

In terms of domain architecture, MTTase N-terminal spans 2-120 (KKVFIRTFGC…LPKMIVDKET (119 aa)). 6 residues coordinate [4Fe-4S] cluster: Cys11, Cys49, Cys83, Cys157, Cys161, and Cys164. In terms of domain architecture, Radical SAM core spans 143–375 (RVEGGAAFVS…NEVIEAETAR (233 aa)). The TRAM domain maps to 378–441 (QTMIGTVQRC…TFSLRGKVVE (64 aa)).

It belongs to the methylthiotransferase family. MiaB subfamily. In terms of assembly, monomer. [4Fe-4S] cluster serves as cofactor.

It is found in the cytoplasm. It catalyses the reaction N(6)-dimethylallyladenosine(37) in tRNA + (sulfur carrier)-SH + AH2 + 2 S-adenosyl-L-methionine = 2-methylsulfanyl-N(6)-dimethylallyladenosine(37) in tRNA + (sulfur carrier)-H + 5'-deoxyadenosine + L-methionine + A + S-adenosyl-L-homocysteine + 2 H(+). In terms of biological role, catalyzes the methylthiolation of N6-(dimethylallyl)adenosine (i(6)A), leading to the formation of 2-methylthio-N6-(dimethylallyl)adenosine (ms(2)i(6)A) at position 37 in tRNAs that read codons beginning with uridine. In Neisseria meningitidis serogroup C / serotype 2a (strain ATCC 700532 / DSM 15464 / FAM18), this protein is tRNA-2-methylthio-N(6)-dimethylallyladenosine synthase.